The primary structure comprises 312 residues: Gamma-soluble NSF attachment protein (312 aa).

Residues 281–312 (KKKAAAPPQAKPEGTAAPAAEEEEDEYAGGLC) form a disordered region. Low complexity predominate over residues 285–299 (AAPPQAKPEGTAAPA). A compositionally biased stretch (acidic residues) spans 300 to 312 (AEEEEDEYAGGLC).

This sequence belongs to the SNAP family. Interacts with RAB11FIP5. Interacts with VTI1A.

It is found in the membrane. The protein localises to the golgi apparatus. In terms of biological role, required for vesicular transport between the endoplasmic reticulum and the Golgi apparatus. In Bos taurus (Bovine), this protein is Gamma-soluble NSF attachment protein.